The primary structure comprises 135 residues: Holo-[acyl-carrier-protein] synthase (135 aa).

The Mg(2+) site is built by Asp-7 and Glu-57.

The protein belongs to the P-Pant transferase superfamily. AcpS family. The cofactor is Mg(2+).

The protein resides in the cytoplasm. It catalyses the reaction apo-[ACP] + CoA = holo-[ACP] + adenosine 3',5'-bisphosphate + H(+). Transfers the 4'-phosphopantetheine moiety from coenzyme A to a Ser of acyl-carrier-protein. In Corynebacterium glutamicum (strain R), this protein is Holo-[acyl-carrier-protein] synthase.